The primary structure comprises 338 residues: NLP effector protein 6 (338 aa).

The N-terminal stretch at 1–19 (MRFTTIFWISLTVLATVRA) is a signal peptide. The disordered stretch occupies residues 68–119 (LTLSPSASSPAKRNVTLPPDTTMRPDPRQTEPPTEAPTPASTPAPTPDPGPW). N-linked (GlcNAc...) asparagine glycosylation is present at Asn-81. Over residues 101–117 (TEAPTPASTPAPTPDPG) the composition is skewed to pro residues. The short motif at 205 to 215 (AIMYSWYFPKD) is the Conserved undecapeptide motif I element. Residues 222-227 (GHRHDW) carry the Hepta-peptide GHRHDWE motif II motif.

It belongs to the Necrosis inducing protein (NPP1) family.

Its subcellular location is the secreted. Secreted effector that contributes strongly to virulence during infection by P.capsici. Causes large necrotic areas in both host C.annuum and non-host N.benthamiana. The chain is NLP effector protein 6 from Phytophthora capsici.